The chain runs to 481 residues: Aspartyl/glutamyl-tRNA(Asn/Gln) amidotransferase subunit B (481 aa).

It belongs to the GatB/GatE family. GatB subfamily. In terms of assembly, heterotrimer of A, B and C subunits.

The catalysed reaction is L-glutamyl-tRNA(Gln) + L-glutamine + ATP + H2O = L-glutaminyl-tRNA(Gln) + L-glutamate + ADP + phosphate + H(+). It carries out the reaction L-aspartyl-tRNA(Asn) + L-glutamine + ATP + H2O = L-asparaginyl-tRNA(Asn) + L-glutamate + ADP + phosphate + 2 H(+). In terms of biological role, allows the formation of correctly charged Asn-tRNA(Asn) or Gln-tRNA(Gln) through the transamidation of misacylated Asp-tRNA(Asn) or Glu-tRNA(Gln) in organisms which lack either or both of asparaginyl-tRNA or glutaminyl-tRNA synthetases. The reaction takes place in the presence of glutamine and ATP through an activated phospho-Asp-tRNA(Asn) or phospho-Glu-tRNA(Gln). This is Aspartyl/glutamyl-tRNA(Asn/Gln) amidotransferase subunit B from Marinomonas sp. (strain MWYL1).